The following is a 360-amino-acid chain: Glycerol-1-phosphate dehydrogenase [NAD(P)+] (360 aa).

NAD(+) contacts are provided by residues 108-112 and 130-133; these read GRVID and TAAS. Aspartate 135 contacts substrate. Serine 139 contacts NAD(+). Residue aspartate 182 coordinates substrate. Zn(2+)-binding residues include aspartate 182 and histidine 262. Histidine 266 is a binding site for substrate. Residue histidine 278 coordinates Zn(2+).

This sequence belongs to the glycerol-1-phosphate dehydrogenase family. It depends on Zn(2+) as a cofactor.

The protein resides in the cytoplasm. The enzyme catalyses sn-glycerol 1-phosphate + NAD(+) = dihydroxyacetone phosphate + NADH + H(+). It carries out the reaction sn-glycerol 1-phosphate + NADP(+) = dihydroxyacetone phosphate + NADPH + H(+). Its pathway is membrane lipid metabolism; glycerophospholipid metabolism. Functionally, catalyzes the NAD(P)H-dependent reduction of dihydroxyacetonephosphate (DHAP or glycerone phosphate) to glycerol 1-phosphate (G1P). The G1P thus generated is used as the glycerophosphate backbone of phospholipids in the cellular membranes of Archaea. In Methanocorpusculum labreanum (strain ATCC 43576 / DSM 4855 / Z), this protein is Glycerol-1-phosphate dehydrogenase [NAD(P)+].